A 520-amino-acid chain; its full sequence is Cytochrome P450 72A397 (520 aa).

Residues 14 to 34 (AVAVAVVVVGWAWKVLNWVWV) traverse the membrane as a helical segment. Cys468 is a binding site for heme.

The protein belongs to the cytochrome P450 family. It depends on heme as a cofactor.

It localises to the membrane. It catalyses the reaction oleanolate + reduced [NADPH--hemoprotein reductase] + O2 = hederagenin + oxidized [NADPH--hemoprotein reductase] + H2O + H(+). In terms of biological role, catalyzes the oxidation of oleanolate at the C-23 position to form hederagenin. This Kalopanax septemlobus (Castor aralia) protein is Cytochrome P450 72A397.